The chain runs to 620 residues: Chaperone protein HscA homolog (620 aa).

Belongs to the heat shock protein 70 family.

Chaperone involved in the maturation of iron-sulfur cluster-containing proteins. Has a low intrinsic ATPase activity which is markedly stimulated by HscB. The chain is Chaperone protein HscA homolog from Pseudomonas fluorescens (strain SBW25).